A 250-amino-acid chain; its full sequence is MQPLQNAGYDRAITVFSPDGRLFQVEYAREAVKRGTTSIGIKCSEGIVLAVDKRTTSNLVEATSIEKIFKIDEHIGAATSGLVADARALVERARVEAQINKITYSEPIRVDSLSKKLCDMLQMYTQNGGVRPFGSALIIGGVYDGICKLFETDPSGALIEYKATAIGSGRSAAMDIFEDQYKDDMNLNEAINLALTAINEATEHETTANNVEIAVIKCGEEVYTKLSQEEVQTFIDEVVSEEESEEESEE.

The protein belongs to the peptidase T1A family. The 20S proteasome core is composed of 14 alpha and 14 beta subunits that assemble into four stacked heptameric rings, resulting in a barrel-shaped structure. The two inner rings, each composed of seven catalytic beta subunits, are sandwiched by two outer rings, each composed of seven alpha subunits. The catalytic chamber with the active sites is on the inside of the barrel. Has a gated structure, the ends of the cylinder being occluded by the N-termini of the alpha-subunits. Is capped at one or both ends by the proteasome regulatory ATPase, PAN.

It localises to the cytoplasm. The formation of the proteasomal ATPase PAN-20S proteasome complex, via the docking of the C-termini of PAN into the intersubunit pockets in the alpha-rings, triggers opening of the gate for substrate entry. Interconversion between the open-gate and close-gate conformations leads to a dynamic regulation of the 20S proteasome proteolysis activity. Its function is as follows. Component of the proteasome core, a large protease complex with broad specificity involved in protein degradation. The chain is Proteasome subunit alpha from Methanobrevibacter smithii (strain ATCC 35061 / DSM 861 / OCM 144 / PS).